A 387-amino-acid chain; its full sequence is Formate-dependent phosphoribosylglycinamide formyltransferase (387 aa).

N(1)-(5-phospho-beta-D-ribosyl)glycinamide contacts are provided by residues 15–16 (EL) and glutamate 75. ATP contacts are provided by residues arginine 106, lysine 147, 152–157 (SSGKGQ), 187–190 (EEFI), and glutamate 195. The region spanning 111 to 301 (DLASNELNIR…EFELHLRAVL (191 aa)) is the ATP-grasp domain. The Mg(2+) site is built by glutamate 260 and glutamate 272. Residues aspartate 279, lysine 349, and 356–357 (RR) contribute to the N(1)-(5-phospho-beta-D-ribosyl)glycinamide site.

It belongs to the PurK/PurT family. As to quaternary structure, homodimer.

The enzyme catalyses N(1)-(5-phospho-beta-D-ribosyl)glycinamide + formate + ATP = N(2)-formyl-N(1)-(5-phospho-beta-D-ribosyl)glycinamide + ADP + phosphate + H(+). It participates in purine metabolism; IMP biosynthesis via de novo pathway; N(2)-formyl-N(1)-(5-phospho-D-ribosyl)glycinamide from N(1)-(5-phospho-D-ribosyl)glycinamide (formate route): step 1/1. Functionally, involved in the de novo purine biosynthesis. Catalyzes the transfer of formate to 5-phospho-ribosyl-glycinamide (GAR), producing 5-phospho-ribosyl-N-formylglycinamide (FGAR). Formate is provided by PurU via hydrolysis of 10-formyl-tetrahydrofolate. This chain is Formate-dependent phosphoribosylglycinamide formyltransferase, found in Prochlorococcus marinus (strain NATL2A).